Here is a 284-residue protein sequence, read N- to C-terminus: Protein phosphatase 1 regulatory subunit 3B (284 aa).

A PP1-binding motif motif is present at residues 61–64; it reads RVSF. The CBM21 domain maps to 124-232; it reads RNRLQTDHVC…SNKGKNYRII (109 aa). S260 carries the phosphoserine modification.

In terms of assembly, interacts with glycogen, PPP1CC catalytic subunit of PP1 and PYGL. Associates with glycogen particles. Forms complexes with debranching enzyme, glycogen phosphorylase, glycogen synthase and phosphorylase kinase which is necessary for its regulation of PP1 activity.

Acts as a glycogen-targeting subunit for phosphatase PP1. Facilitates interaction of the PP1 with enzymes of the glycogen metabolism and regulates its activity. Suppresses the rate at which PP1 dephosphorylates (inactivates) glycogen phosphorylase and enhances the rate at which it activates glycogen synthase and therefore limits glycogen breakdown. Its activity is inhibited by PYGL, resulting in inhibition of the glycogen synthase and glycogen phosphorylase phosphatase activities of PP1. Dramatically increases basal and insulin-stimulated glycogen synthesis upon overexpression in hepatocytes. This chain is Protein phosphatase 1 regulatory subunit 3B (PPP1R3B), found in Bos taurus (Bovine).